A 959-amino-acid chain; its full sequence is Probable serine/threonine-protein kinase DDB_G0291664 (959 aa).

Positions 154-213 (QQQQQQQLTPPPSPPLLPIPQPPAQNEEQQLTQPPSIPPPQQKQIKIQKSDRGTQVKSIT) are disordered. The segment covering 162–176 (TPPPSPPLLPIPQPP) has biased composition (pro residues). 2 ANK repeats span residues 294–324 (KGETPLHSLILYNSESCLKKLVIAKINCMGI) and 333–362 (LNKNLLTHAIEKGDFEIIKLVLIGGCPLKM). The Protein kinase domain occupies 482–762 (IDFHTQIGSA…EVGIIETEFL (281 aa)). Residues 488–496 (IGSAGNASV) and Lys509 each bind ATP. Asp610 acts as the Proton acceptor in catalysis. The disordered stretch occupies residues 904–959 (NNINNNNNNNNNCNNSKKFKTTSESTSALGSDASSSSSPSSSSPSPKYSASIYHHQ).

The protein belongs to the protein kinase superfamily. Ser/Thr protein kinase family.

The catalysed reaction is L-seryl-[protein] + ATP = O-phospho-L-seryl-[protein] + ADP + H(+). The enzyme catalyses L-threonyl-[protein] + ATP = O-phospho-L-threonyl-[protein] + ADP + H(+). This Dictyostelium discoideum (Social amoeba) protein is Probable serine/threonine-protein kinase DDB_G0291664.